The primary structure comprises 1201 residues: Vitamin B12-dependent ribonucleotide reductase (1201 aa).

Residues S153, 198 to 199, G230, 482 to 486, and 683 to 687 each bind substrate; these read AC, NPCSE, and PTGTI. C199 and C495 form a disulfide bridge. The active-site Proton acceptor is N482. Catalysis depends on C484, which acts as the Cysteine radical intermediate. The Proton acceptor role is filled by E486. A compositionally biased stretch (basic and acidic residues) spans 1100–1118; the sequence is DEIGSKRATAESNGQEKET. Residues 1100–1120 form a disordered region; the sequence is DEIGSKRATAESNGQEKETLS.

Belongs to the ribonucleoside diphosphate reductase class-2 family. The cofactor is adenosylcob(III)alamin.

It catalyses the reaction a 2'-deoxyribonucleoside 5'-diphosphate + [thioredoxin]-disulfide + H2O = a ribonucleoside 5'-diphosphate + [thioredoxin]-dithiol. Its function is as follows. Catalyzes the reduction of ribonucleotides to deoxyribonucleotides. May function to provide a pool of deoxyribonucleotide precursors for DNA repair during oxygen limitation and/or for immediate growth after restoration of oxygen. In Leptospira interrogans serogroup Icterohaemorrhagiae serovar Lai (strain 56601), this protein is Vitamin B12-dependent ribonucleotide reductase (nrdJ).